Here is a 1089-residue protein sequence, read N- to C-terminus: SUMO-specific isopeptidase USPL1 (1089 aa).

The tract at residues 90 to 128 (LISPDSEDCPTPSKPQKRKRLETNCRNSPLPVHSKKTRS) is disordered. In terms of domain architecture, USP spans 215 to 488 (VQWKNTQALC…ETHIVIWERK (274 aa)). C224 functions as the Nucleophile in the catalytic mechanism. The segment at 224–483 (CWLDCILSAL…EVPASETHIV (260 aa)) is SUMO-binding. The Proton acceptor role is filled by H444. 4 disordered regions span residues 687-739 (DSQT…KEDQ), 791-817 (ISRRSKRMSRKAKHMEELSPRNSSPPL), 835-868 (LREQEGSRPAPLRHRSPGNESAISPASRGDAAED), and 891-928 (LISSPHREPSLSDHSEPASHCGTPASDQSEPVSHCGSP). The span at 719 to 733 (TASSKTVAARSAQNQ) shows a compositional bias: polar residues. The span at 791-803 (ISRRSKRMSRKAK) shows a compositional bias: basic residues. S894 carries the post-translational modification Phosphoserine. Residues 895-907 (PHREPSLSDHSEP) are compositionally biased toward basic and acidic residues.

The protein belongs to the peptidase C19 family. Interacts with ELL.

The protein resides in the nucleus. Its subcellular location is the cajal body. Its function is as follows. SUMO-specific isopeptidase involved in protein desumoylation. Specifically binds SUMO proteins with a higher affinity for SUMO2 and SUMO3 which it cleaves more efficiently. Also able to process full-length SUMO proteins to their mature forms. Plays a key role in RNA polymerase-II-mediated snRNA transcription in the Cajal bodies. Is a component of complexes that can bind to U snRNA genes. This Mus musculus (Mouse) protein is SUMO-specific isopeptidase USPL1 (Uspl1).